A 597-amino-acid chain; its full sequence is MPIINGQKMACGPCIRGHRSTKCNHYNERVMVPVRKPGRPLSTCPCPPGKPCVCGGVRVAIPKKQKCHCPAGTVDSATSSEFDPSPVDTPISPASRTSSNRVTKSGSGSKSASRRQSLALANLERMDPNSINLIPSPNGNGMIGITAMVSPRDATFGHPMGMVPMGPRESFVPAPPPDFGGPMGYNMPPSMPPHMPPPHYPPHIQIPQHIKTENGGFVPMLNGTFVSPVPIPAFVDGPHPQGMQAFNGPPPPPPSNPVLEPSAMSKPKGGSGGGGCCGGGKKAPQIQAPPPVPAPLPTPPQQQMPNIMPPPQPQNAPSGGGGSCCSSKSSQPPPMPQMSPNAMQAPPQPGFGQGFMPQYQTPIDIKMENMHHHQPFQFPGQTVFTYPAEYGSWQMPINPAIWQQVVSRPPTQQQHETPISATAPNGNNGTVGGNSHECGCGEGCQCVGCLAHPFNSQMLQYVQNAYSPNSSHGNSGSADSSANASPSANPLNLASPVEIPSGPELPPSHQTQPQPPPRPNANESDGSSNAPTPPNEGSPALSNEEELTALDYYFVHLPISALCGGALDMCPCDESCECVGCLVHNTAGFPQGDGGFS.

Residues 1 to 41 constitute a DNA-binding region (copper-fist); the sequence is MPIINGQKMACGPCIRGHRSTKCNHYNERVMVPVRKPGRPL. Positions 11, 14, 23, and 25 each coordinate Zn(2+). Disordered regions lie at residues 70-115, 233-352, 407-428, and 467-541; these read PAGT…ASRR, AFVD…PGFG, SRPP…NGNN, and SPNS…SPAL. Positions 92–103 are enriched in polar residues; that stretch reads SPASRTSSNRVT. The span at 104 to 115 shows a compositional bias: low complexity; that stretch reads KSGSGSKSASRR. Positions 269-281 are enriched in gly residues; sequence GGSGGGGCCGGGK. Over residues 287-314 the composition is skewed to pro residues; it reads QAPPPVPAPLPTPPQQQMPNIMPPPQPQ. Residues 469-495 are compositionally biased toward low complexity; it reads NSSHGNSGSADSSANASPSANPLNLAS. Residues 521-530 are compositionally biased toward polar residues; the sequence is ANESDGSSNA.

The protein localises to the nucleus. In terms of biological role, copper-sensing transcription factor that regulates copper uptake by transactivation of Ctr3, a high affinity copper permease. Binds to the palindromic UAS sequence 5'-TGTTGCTCANNNNAGAGCAACT-3'. Also transactivates Sod2, a mitochondrial manganese superoxide dismutase through the palindromic UAS sequence 5'-GTTTGCTCA-3' with 352 bp separating the two inverted repeats. Loss of function indirectly leads to rearrangement of mitochondrial DNA associated with senescence in wild-type strains. The chain is Protein GRISEA from Podospora anserina (Pleurage anserina).